A 729-amino-acid chain; its full sequence is Solute carrier family 15 member 2 (729 aa).

The disordered stretch occupies residues 1–35; that stretch reads MNPFQKNESKETLFSPVSTEEMLPRPPSPPKKSPP. At 1–57 the chain is on the cytoplasmic side; sequence MNPFQKNESKETLFSPVSTEEMLPRPPSPPKKSPPKIFGSSYPVSIAFIVVNEFCER. At S9 the chain carries Phosphoserine. A Phosphothreonine modification is found at T12. S28 is modified (phosphoserine). Residues 58-78 form a helical membrane-spanning segment; the sequence is FSYYGMKAVLTLYFLYFLHWN. Residues 79–87 lie on the Extracellular side of the membrane; sequence EDTSTSVYH. The chain crosses the membrane as a helical span at residues 88–108; that stretch reads AFSSLCYFTPILGAAIADSWL. Over 109–113 the chain is Cytoplasmic; it reads GKFKT. The chain crosses the membrane as a helical span at residues 114–134; that stretch reads IIYLSLVYVLGHVFKSLGAIP. The Extracellular segment spans residues 135 to 139; it reads ILGGK. Residues 140-160 traverse the membrane as a helical segment; that stretch reads MLHTILSLVGLSLIALGTGGI. Over 161–183 the chain is Cytoplasmic; that stretch reads KPCVAAFGGDQFEEEHAEARTRY. A helical membrane pass occupies residues 184–204; the sequence is FSVFYLAINAGSLISTFITPM. The Extracellular segment spans residues 205-217; the sequence is LRGDVKCFGQDCY. The helical transmembrane segment at 218–238 threads the bilayer; the sequence is ALAFGVPGLLMVLALVVFAMG. Over 239-295 the chain is Cytoplasmic; sequence SKMYRKPPPEGNIVAQVIKCIWFALCNRFRNRSGDLPKRQHWLDWAAEKYPKHLIAD. A helical transmembrane segment spans residues 296 to 316; it reads VKALTRVLFLYIPLPMFWALL. Over 317–343 the chain is Extracellular; the sequence is DQQGSRWTLQANKMNGDLGFFVLQPDQ. Residues 344–364 form a helical membrane-spanning segment; the sequence is MQVLNPFLVLIFIPLFDLVIY. The Cytoplasmic portion of the chain corresponds to 365 to 380; the sequence is RLISKCRINFSSLRKM. Residues 381 to 401 form a helical membrane-spanning segment; it reads AVGMILACLAFAVAALVETKI. The Extracellular segment spans residues 402–611; the sequence is NGMIHPQPAS…PVNKLSIAWQ (210 aa). The extracellular domain (ECD) stretch occupies residues 402 to 611; that stretch reads NGMIHPQPAS…PVNKLSIAWQ (210 aa). 4 N-linked (GlcNAc...) asparagine glycosylation sites follow: N435, N448, N528, and N587. The helical transmembrane segment at 612-632 threads the bilayer; sequence LPQYVLVTAAEVMFSVTGLEF. The Cytoplasmic segment spans residues 633 to 643; sequence SYSQAPSSMKS. A helical membrane pass occupies residues 644-664; sequence VLQAAWLLTVAVGNIIVLVVA. The Extracellular portion of the chain corresponds to 665–674; that stretch reads QFSGLAQWAE. A helical membrane pass occupies residues 675-695; that stretch reads FVLFSCLLLVVCLIFSVMAYY. The Cytoplasmic segment spans residues 696 to 729; sequence YVPLKSEDTREATDKQIPAVQGNMINLETKNTRL.

The protein belongs to the major facilitator superfamily. Proton-dependent oligopeptide transporter (POT/PTR) (TC 2.A.17) family. In terms of assembly, interacts (via extracellular domain region) with trypsin. As to expression, strongly expressed in kidney cortex and medulla. Also detected in brain, lung and spleen. Expressed in choroid plexus.

The protein resides in the apical cell membrane. Its subcellular location is the cytoplasmic vesicle. It is found in the phagosome membrane. It localises to the cell membrane. It carries out the reaction a dipeptide(out) + 2 H(+)(out) = a dipeptide(in) + 2 H(+)(in). The catalysed reaction is glycyl-L-leucine(out) + 2 H(+)(out) = glycyl-L-leucine(in) + 2 H(+)(in). It catalyses the reaction glycyl-L-lysine(out) + 2 H(+)(out) = glycyl-L-lysine(in) + 2 H(+)(in). The enzyme catalyses glycyl-L-glutamate(out) + 3 H(+)(out) = glycyl-L-glutamate(in) + 3 H(+)(in). It carries out the reaction L-alanyl-L-alanine(out) + 2 H(+)(out) = L-alanyl-L-alanine(in) + 2 H(+)(in). The catalysed reaction is an L-amino acid tripeptide(out) + 2 H(+)(out) = an L-amino acid tripeptide(in) + 2 H(+)(in). It catalyses the reaction N-acetyl-D-muramoyl-L-alanyl-D-isoglutamine(out) + 3 H(+)(out) = N-acetyl-D-muramoyl-L-alanyl-D-isoglutamine(in) + 3 H(+)(in). The enzyme catalyses carnosine(out) + 2 H(+)(out) = carnosine(in) + 2 H(+)(in). Functionally, proton-coupled amino-acid transporter that transports oligopeptides of 2 to 4 amino acids with a preference for dipeptides. Transports neutral and anionic dipeptides with a proton to peptide stoichiometry of 2:1 or 3:1. In kidney, involved in the absorption of circulating di- and tripeptides from the glomerular filtrate. Can also transport beta-lactam antibiotics, such as the aminocephalosporin cefadroxil, and other antiviral and anticancer drugs. Transports the dipeptide-like aminopeptidase inhibitor bestatin. Also able to transport carnosine. Involved in innate immunity by promoting the detection of microbial pathogens by NOD-like receptors (NLRs). Mediates transport of bacterial peptidoglycans across the plasma membrane or, in macrophages, the phagosome membrane: catalyzes the transport of certain bacterial peptidoglycans, such as muramyl dipeptide (MDP), the NOD2 ligand. In Rattus norvegicus (Rat), this protein is Solute carrier family 15 member 2.